Consider the following 87-residue polypeptide: Small ribosomal subunit protein bS20 (87 aa).

A disordered region spans residues 1–25 (MANIKSAKKRAVQSEKHRLHNASRR).

The protein belongs to the bacterial ribosomal protein bS20 family.

In terms of biological role, binds directly to 16S ribosomal RNA. The polypeptide is Small ribosomal subunit protein bS20 (Baumannia cicadellinicola subsp. Homalodisca coagulata).